The sequence spans 253 residues: Proteasome subunit alpha (253 aa).

Residues Ala232–Gly242 are compositionally biased toward low complexity. Positions Ala232–Lys253 are disordered. Positions Ser243–Lys253 are enriched in acidic residues.

Belongs to the peptidase T1A family. As to quaternary structure, the 20S proteasome core is composed of 14 alpha and 14 beta subunits that assemble into four stacked heptameric rings, resulting in a barrel-shaped structure. The two inner rings, each composed of seven catalytic beta subunits, are sandwiched by two outer rings, each composed of seven alpha subunits. The catalytic chamber with the active sites is on the inside of the barrel. Has a gated structure, the ends of the cylinder being occluded by the N-termini of the alpha-subunits. Is capped by the proteasome-associated ATPase, ARC.

Its subcellular location is the cytoplasm. It functions in the pathway protein degradation; proteasomal Pup-dependent pathway. Its activity is regulated as follows. The formation of the proteasomal ATPase ARC-20S proteasome complex, likely via the docking of the C-termini of ARC into the intersubunit pockets in the alpha-rings, may trigger opening of the gate for substrate entry. Interconversion between the open-gate and close-gate conformations leads to a dynamic regulation of the 20S proteasome proteolysis activity. Its function is as follows. Component of the proteasome core, a large protease complex with broad specificity involved in protein degradation. In Streptomyces avermitilis (strain ATCC 31267 / DSM 46492 / JCM 5070 / NBRC 14893 / NCIMB 12804 / NRRL 8165 / MA-4680), this protein is Proteasome subunit alpha.